The chain runs to 150 residues: MRAVVQRVNSANVDVNGKIIGKIKKGLLVLLGVGKNDTESDAEYLVNKILNLRIFDDNKGKMNLSLLDIKGDILIVSQFTLYGDCRRGRRPSYSDSASPEKAKKLYEYFVEKIRKEYNIKVETGEFGAYMKVNLENDGPVTLLLDSKKVF.

Residues 138 to 139 (GP) carry the Gly-cisPro motif, important for rejection of L-amino acids motif.

The protein belongs to the DTD family. As to quaternary structure, homodimer.

It localises to the cytoplasm. The catalysed reaction is glycyl-tRNA(Ala) + H2O = tRNA(Ala) + glycine + H(+). It catalyses the reaction a D-aminoacyl-tRNA + H2O = a tRNA + a D-alpha-amino acid + H(+). Its function is as follows. An aminoacyl-tRNA editing enzyme that deacylates mischarged D-aminoacyl-tRNAs. Also deacylates mischarged glycyl-tRNA(Ala), protecting cells against glycine mischarging by AlaRS. Acts via tRNA-based rather than protein-based catalysis; rejects L-amino acids rather than detecting D-amino acids in the active site. By recycling D-aminoacyl-tRNA to D-amino acids and free tRNA molecules, this enzyme counteracts the toxicity associated with the formation of D-aminoacyl-tRNA entities in vivo and helps enforce protein L-homochirality. This Thermosipho melanesiensis (strain DSM 12029 / CIP 104789 / BI429) protein is D-aminoacyl-tRNA deacylase.